We begin with the raw amino-acid sequence, 38 residues long: Photosystem II reaction center protein L (38 aa).

Residues 17–37 traverse the membrane as a helical segment; it reads SLFWGLLLIFVLAILFSNYFF.

Belongs to the PsbL family. PSII is composed of 1 copy each of membrane proteins PsbA, PsbB, PsbC, PsbD, PsbE, PsbF, PsbH, PsbI, PsbJ, PsbK, PsbL, PsbM, PsbT, PsbX, PsbY, PsbZ, Psb30/Ycf12, at least 3 peripheral proteins of the oxygen-evolving complex and a large number of cofactors. It forms dimeric complexes.

It localises to the plastid. It is found in the chloroplast thylakoid membrane. In terms of biological role, one of the components of the core complex of photosystem II (PSII). PSII is a light-driven water:plastoquinone oxidoreductase that uses light energy to abstract electrons from H(2)O, generating O(2) and a proton gradient subsequently used for ATP formation. It consists of a core antenna complex that captures photons, and an electron transfer chain that converts photonic excitation into a charge separation. This subunit is found at the monomer-monomer interface and is required for correct PSII assembly and/or dimerization. The chain is Photosystem II reaction center protein L from Chara vulgaris (Common stonewort).